We begin with the raw amino-acid sequence, 864 residues long: DNA mismatch repair protein MutS (864 aa).

613–620 (GPNMGGKS) lines the ATP pocket.

Belongs to the DNA mismatch repair MutS family.

Functionally, this protein is involved in the repair of mismatches in DNA. It is possible that it carries out the mismatch recognition step. This protein has a weak ATPase activity. The sequence is that of DNA mismatch repair protein MutS from Actinobacillus pleuropneumoniae serotype 7 (strain AP76).